We begin with the raw amino-acid sequence, 376 residues long: Small ribosomal subunit protein uS11m (376 aa).

Belongs to the universal ribosomal protein uS11 family. In terms of assembly, component of the mitochondrial small ribosomal subunit (mt-SSU). Mature N.crassa 74S mitochondrial ribosomes consist of a small (37S) and a large (54S) subunit. The 37S small subunit contains a 16S ribosomal RNA (16S mt-rRNA) and 32 different proteins. The 54S large subunit contains a 23S rRNA (23S mt-rRNA) and 42 different proteins.

Its subcellular location is the mitochondrion. In terms of biological role, component of the mitochondrial ribosome (mitoribosome), a dedicated translation machinery responsible for the synthesis of mitochondrial genome-encoded proteins, including at least some of the essential transmembrane subunits of the mitochondrial respiratory chain. The mitoribosomes are attached to the mitochondrial inner membrane and translation products are cotranslationally integrated into the membrane. This is Small ribosomal subunit protein uS11m (mrps18) from Neurospora crassa (strain ATCC 24698 / 74-OR23-1A / CBS 708.71 / DSM 1257 / FGSC 987).